We begin with the raw amino-acid sequence, 119 residues long: Basic phospholipase A2 homolog 1 (119 aa).

7 disulfide bridges follow: Cys11-Cys72, Cys27-Cys118, Cys29-Cys45, Cys44-Cys99, Cys51-Cys92, Cys61-Cys85, and Cys79-Cys90. An important for membrane-damaging activities in eukaryotes and bacteria; heparin-binding region spans residues 107 to 117 (KENYNIDPKKR).

This sequence belongs to the phospholipase A2 family. Group I subfamily. D49 sub-subfamily. In terms of tissue distribution, expressed by the venom gland.

It localises to the secreted. The protein is Basic phospholipase A2 homolog 1 of Notechis scutatus scutatus (Mainland tiger snake).